The chain runs to 694 residues: Elongation factor G (694 aa).

Residues 8 to 287 enclose the tr-type G domain; it reads EDYRNFGIMA…AVVEFLPAPT (280 aa). GTP-binding positions include 17–24, 86–90, and 140–143; these read AHIDAGKT, DTPGH, and NKMD.

The protein belongs to the TRAFAC class translation factor GTPase superfamily. Classic translation factor GTPase family. EF-G/EF-2 subfamily.

The protein localises to the cytoplasm. In terms of biological role, catalyzes the GTP-dependent ribosomal translocation step during translation elongation. During this step, the ribosome changes from the pre-translocational (PRE) to the post-translocational (POST) state as the newly formed A-site-bound peptidyl-tRNA and P-site-bound deacylated tRNA move to the P and E sites, respectively. Catalyzes the coordinated movement of the two tRNA molecules, the mRNA and conformational changes in the ribosome. In Brucella anthropi (strain ATCC 49188 / DSM 6882 / CCUG 24695 / JCM 21032 / LMG 3331 / NBRC 15819 / NCTC 12168 / Alc 37) (Ochrobactrum anthropi), this protein is Elongation factor G.